The following is an 867-amino-acid chain: MISAHILSRQATRPGHRGPRFTTHSTALLVQRSLGQGLPLAHRRTTRAWESTSSSTASTGSHKESGHIETAPHESLLFFNNLFPLKLSSILIWRPWTSEDLLQRFEQSSYSFIDPIRLVKRAINTHDQVPIEVTQIIPRLKDGGAFVKFTHPSDMSAAVVESKLSELLQNNPIKPWFNPFGRVKAGLVEGVPWLEDLYRLPRSRIRVEFVAAKDDASPAELSQETLYSIFRKFGKITEITSQPTDSKVLPRFAYIDFVLVRDAIMARNCMHGFVLREQGSKNATKLRLSYEQRVKAHHIWAWFTSHPRIVIPLVAALIAAFTVAVFDPIREFFVKAHVQKYFEFTNSRLYKWFKSQTSDILAFRRRKTEDAGLNALFTHRKDLIDSIQTGLLESVDTFTVVHGPRGSGKKELILDQVLKERSNVLHIDCKPVVEARGEAGTIGRLAFEVGYRPVFSWSNNISSLVDLAVQSTTGVKANFSENLESQVVKILQTTASALKQVGLSERKKEDKDADLSEDAYLEAHPERRPVIVIDHFLHKSEEKGVIYDRIADWAAALVQSNIAHVIFLTDDASYSKPLQRSLPDRVFRSVTLGDLSPDVAKKFVISQLQTDTKFAHDGQQKDSESGDQDNDNKNQKKDSNTPAPLDPTLLKELDTCITALGGRLTDLQVLARRLKIGQSPRKAVQEIIDSTASDILRMFLLSKSSTSDRKYTTEQAWYLISHLAASPSSSIPYNSVLLSNTFASSPETALEALANAELITVKSQNGMPSEIKAGKPVYQAAFQKLASDEKVKARMDLLVLTELAKMETQKIEKVEQELVMLQGLMARRPGDVSERVEYLLEKMKGGQARLKGLEKEMGVVKGQMVKG.

Disordered regions lie at residues 1-20 (MISAHILSRQATRPGHRGPR) and 44-66 (RTTRAWESTSSSTASTGSHKESG). A mitochondrion-targeting transit peptide spans 1 to 41 (MISAHILSRQATRPGHRGPRFTTHSTALLVQRSLGQGLPLA). Residues 42 to 308 (HRRTTRAWES…IWAWFTSHPR (267 aa)) are Mitochondrial matrix-facing. Over residues 48-59 (AWESTSSSTAST) the composition is skewed to low complexity. Positions 203-293 (SRIRVEFVAA…TKLRLSYEQR (91 aa)) constitute an RRM domain. A helical membrane pass occupies residues 309–329 (IVIPLVAALIAAFTVAVFDPI). Topologically, residues 330–867 (REFFVKAHVQ…GVVKGQMVKG (538 aa)) are mitochondrial intermembrane. Over residues 614-639 (FAHDGQQKDSESGDQDNDNKNQKKDS) the composition is skewed to basic and acidic residues. The disordered stretch occupies residues 614–647 (FAHDGQQKDSESGDQDNDNKNQKKDSNTPAPLDP). The stretch at 797–857 (LLVLTELAKM…ARLKGLEKEM (61 aa)) forms a coiled coil.

This sequence belongs to the YME2 family.

It localises to the mitochondrion inner membrane. In terms of biological role, plays a role in maintaining the mitochondrial genome and in controlling the mtDNA escape. Involved in the regulation of mtDNA nucleotide structure and number. May have a dispensable role in early maturation of pre-rRNA. This Neurospora crassa (strain ATCC 24698 / 74-OR23-1A / CBS 708.71 / DSM 1257 / FGSC 987) protein is Mitochondrial escape protein 2 (msp-45).